A 421-amino-acid polypeptide reads, in one-letter code: MSAHSMLCERIAIAKELIKRAESLSRSRKGGIEGGAKLCSKLKAELKFLQKVEAGKVAIKESHLQSTNLTHLRAIVESAENLEEVVSVLHVFGYTDTLGEKQTLVVDVVANGGHTWVKAIGRKAEALHNIWLGRGQYGDKSIIEQAEDFLQASHQQPVQYSNPHIIFAFYNSVSSPMAEKLKEMGISVRGDIVAVNALLDHPEELQPSESESDDEGPELLQVTRVDRENILASVAFPTEIKVDVCKRVNLDITTLITYVSALSYGGCHFIFKEKVLTEQAEQERKEQVLPQLEAFMKDKELFACESAVKDFQSILDTLGGPGERERATVLIKRINVVPDQPSERALRLVASSKINSRSLTIFGTGDTLKAITMTANSGFVRAANNQGVKFSVFIHQPRALTESKEALATPLPKDYTTDSEH.

This sequence belongs to the UPF0415 family.

This Homo sapiens (Human) protein is UPF0415 protein C7orf25 (C7orf25).